We begin with the raw amino-acid sequence, 242 residues long: Small ribosomal subunit protein uS2 (242 aa).

This sequence belongs to the universal ribosomal protein uS2 family.

The sequence is that of Small ribosomal subunit protein uS2 from Shewanella loihica (strain ATCC BAA-1088 / PV-4).